The primary structure comprises 291 residues: Pituitary-specific positive transcription factor 1 (291 aa).

Positions 5-13 match the 9aaTAD motif; it reads PFTSTDTFI. One can recognise a POU-specific domain in the interval 124–198; sequence MDSPEIRELE…ILFKWLEEAE (75 aa). The segment at residues 214–273 is a DNA-binding region (homeobox); the sequence is KRKRRTTISIAAKDALERHFGEQNKPSSQEILRMAEELNLEKEVVRVWFCNRRQREKRVK.

This sequence belongs to the POU transcription factor family. Class-1 subfamily. Interacts with PITX1. Interacts with LHX3. Interacts with ELK1.

The protein resides in the nucleus. Transcription factor involved in the specification of the lactotrope, somatotrope, and thyrotrope phenotypes in the developing anterior pituitary. Activates growth hormone and prolactin genes. Specifically binds to the consensus sequence 5'-TAAAT-3'. The protein is Pituitary-specific positive transcription factor 1 (POU1F1) of Ovis aries (Sheep).